A 1403-amino-acid polypeptide reads, in one-letter code: Centrosomal protein of 162 kDa (1403 aa).

Residues 20–46 are disordered; it reads LSDDSFENSNKTPRQPNEDNKEMKKKD. The segment covering 35–46 has biased composition (basic and acidic residues); it reads PNEDNKEMKKKD. 2 positions are modified to phosphoserine: Ser-160 and Ser-163. 4 disordered regions span residues 169-243, 256-292, 306-348, and 453-606; these read LHRY…MLAN, VGLSSQEKATPKAKAPPEITDDGPAETGVPYGQSSGD, SLGD…ESDL, and NPSL…GGNR. Residues 178-208 are compositionally biased toward acidic residues; sequence PAEDGCENESEQEELPETYSDDFEDAEDADD. The segment covering 210–238 has biased composition (basic and acidic residues); it reads LITKDEETHPKENSESGKDSFPKQEEEKT. Residues 485–500 show a composition bias toward basic residues; that stretch reads PCKKARSTPSLPKRKP. 2 stretches are compositionally biased toward basic and acidic residues: residues 526 to 536 and 571 to 585; these read LEKKTSKDNTK and PHREGSPATPKRPED. Residues 614–1124 are a coiled coil; it reads KRAQDAEEKW…QKERRMMLSR (511 aa). Residues 1126 to 1147 form a disordered region; it reads IPRSREETAAKRLKKDPNRGHG. Residues 1128–1144 are compositionally biased toward basic and acidic residues; sequence RSREETAAKRLKKDPNR. The stretch at 1174 to 1386 forms a coiled coil; it reads EENYRLRSEL…LDVLRELHRQ (213 aa).

This sequence belongs to the CEP162 family. Interacts with CPNE4. Interacts with alpha-tubulin. Interacts with CEP290.

The protein resides in the cytoplasm. Its subcellular location is the cytoskeleton. It is found in the microtubule organizing center. It localises to the centrosome. The protein localises to the centriole. The protein resides in the spindle. Its subcellular location is the nucleus. Its function is as follows. Required to promote assembly of the transition zone in primary cilia. Acts by specifically recognizing and binding the axonemal microtubule. Localizes to the distal ends of centrioles before ciliogenesis and directly binds to axonemal microtubule, thereby promoting and restricting transition zone formation specifically at the cilia base. Required to mediate CEP290 association with microtubules. The polypeptide is Centrosomal protein of 162 kDa (Cep162) (Mus musculus (Mouse)).